We begin with the raw amino-acid sequence, 325 residues long: N-acetyl-gamma-glutamyl-phosphate reductase (325 aa).

Cysteine 135 is a catalytic residue.

Belongs to the NAGSA dehydrogenase family. Type 1 subfamily.

The protein resides in the cytoplasm. The enzyme catalyses N-acetyl-L-glutamate 5-semialdehyde + phosphate + NADP(+) = N-acetyl-L-glutamyl 5-phosphate + NADPH + H(+). It functions in the pathway amino-acid biosynthesis; L-arginine biosynthesis; N(2)-acetyl-L-ornithine from L-glutamate: step 3/4. Its function is as follows. Catalyzes the NADPH-dependent reduction of N-acetyl-5-glutamyl phosphate to yield N-acetyl-L-glutamate 5-semialdehyde. This chain is N-acetyl-gamma-glutamyl-phosphate reductase, found in Flavobacterium johnsoniae (strain ATCC 17061 / DSM 2064 / JCM 8514 / BCRC 14874 / CCUG 350202 / NBRC 14942 / NCIMB 11054 / UW101) (Cytophaga johnsonae).